We begin with the raw amino-acid sequence, 165 residues long: Glycine cleavage system H protein, mitochondrial (165 aa).

Residues 1–34 (MALRMWASSTANALKLSSSSRLHLSPTFSISRCF) constitute a mitochondrion transit peptide. The 83-residue stretch at 56–138 (VATIGITDHA…YEDGWMIKIK (83 aa)) folds into the Lipoyl-binding domain. Lys97 bears the N6-lipoyllysine mark.

It belongs to the GcvH family. The glycine cleavage system is composed of four proteins: P, T, L and H. It depends on (R)-lipoate as a cofactor.

The protein resides in the mitochondrion. The glycine cleavage system catalyzes the degradation of glycine. The H protein shuttles the methylamine group of glycine from the P protein to the T protein. In Pisum sativum (Garden pea), this protein is Glycine cleavage system H protein, mitochondrial (GDCSH).